Reading from the N-terminus, the 242-residue chain is Probable transcriptional regulatory protein LSL_0422 (242 aa).

The disordered stretch occupies residues 1–21 (MSGHSKWHNIQGRKNAQDAKR).

The protein belongs to the TACO1 family.

It is found in the cytoplasm. The chain is Probable transcriptional regulatory protein LSL_0422 from Ligilactobacillus salivarius (strain UCC118) (Lactobacillus salivarius).